Here is a 305-residue protein sequence, read N- to C-terminus: Oxygen-dependent coproporphyrinogen-III oxidase (305 aa).

Ser93 provides a ligand contact to substrate. 2 residues coordinate a divalent metal cation: His97 and His107. His107 acts as the Proton donor in catalysis. 109 to 111 contributes to the substrate binding site; that stretch reads NVR. Positions 146 and 176 each coordinate a divalent metal cation. The interval 241-276 is important for dimerization; it reads YVEFNLVFDRGTLFGLQSGGRTESILMSLPPQVRWG. Position 259–261 (259–261) interacts with substrate; that stretch reads GGR.

The protein belongs to the aerobic coproporphyrinogen-III oxidase family. As to quaternary structure, homodimer. The cofactor is a divalent metal cation.

It is found in the cytoplasm. The catalysed reaction is coproporphyrinogen III + O2 + 2 H(+) = protoporphyrinogen IX + 2 CO2 + 2 H2O. It participates in porphyrin-containing compound metabolism; protoporphyrin-IX biosynthesis; protoporphyrinogen-IX from coproporphyrinogen-III (O2 route): step 1/1. In terms of biological role, involved in the heme biosynthesis. Catalyzes the aerobic oxidative decarboxylation of propionate groups of rings A and B of coproporphyrinogen-III to yield the vinyl groups in protoporphyrinogen-IX. The protein is Oxygen-dependent coproporphyrinogen-III oxidase of Pseudomonas aeruginosa (strain UCBPP-PA14).